Consider the following 298-residue polypeptide: FH protein interacting protein FIP2 (298 aa).

Residues 9-80 enclose the BTB domain; sequence SMVRLNIGGK…LRDGVIPSLS (72 aa). Pentapeptide repeat domains lie at 129–165, 166–203, 216–255, and 256–295; these read ERVR…FFSR, TNLQ…GALL, ACLV…NLKG, and AKLS…NMTG.

In terms of assembly, interacts with FH1. In terms of tissue distribution, expressed in all tissues but preferentially in roots and flowers.

It functions in the pathway protein modification; protein ubiquitination. Its function is as follows. May act as a substrate-specific adapter of an E3 ubiquitin-protein ligase complex (CUL3-RBX1-BTB) which mediates the ubiquitination and subsequent proteasomal degradation of target proteins. The polypeptide is FH protein interacting protein FIP2 (FIP2) (Arabidopsis thaliana (Mouse-ear cress)).